A 61-amino-acid chain; its full sequence is Small ribosomal subunit protein bS21 (61 aa).

Belongs to the bacterial ribosomal protein bS21 family.

The sequence is that of Small ribosomal subunit protein bS21 from Leuconostoc mesenteroides subsp. mesenteroides (strain ATCC 8293 / DSM 20343 / BCRC 11652 / CCM 1803 / JCM 6124 / NCDO 523 / NBRC 100496 / NCIMB 8023 / NCTC 12954 / NRRL B-1118 / 37Y).